The following is a 219-amino-acid chain: Interleukin-6 (219 aa).

The first 20 residues, 1-20 (MNSSTRYLSLLSALVVLVKG), serve as a signal peptide directing secretion. C103 and C111 form a disulfide bridge.

Belongs to the IL-6 superfamily. Component of a hexamer of two molecules each of IL6, IL6R and IL6ST; first binds to IL6R to associate with the signaling subunit IL6ST. In terms of tissue distribution, expressed in spleen, gill and gastrointestinal tract, ovary and brain. Highest expression in ovary.

The protein localises to the secreted. Cytokine with a wide variety of biological functions in immunity, tissue regeneration, and metabolism. Binds to IL6R, then the complex associates to the signaling subunit IL6ST/gp130 to trigger the intracellular IL6-signaling pathway. The interaction with the membrane-bound IL6R and IL6ST stimulates 'classic signaling', whereas the binding of IL6 and soluble IL6R to IL6ST stimulates 'trans-signaling'. Alternatively, 'cluster signaling' occurs when membrane-bound IL6:IL6R complexes on transmitter cells activate IL6ST receptors on neighboring receiver cells. The polypeptide is Interleukin-6 (il6) (Oncorhynchus mykiss (Rainbow trout)).